Here is a 304-residue protein sequence, read N- to C-terminus: Ornithine carbamoyltransferase (304 aa).

Carbamoyl phosphate is bound by residues 47–50 (STRT), Arg-98, and 125–128 (HPCQ). L-ornithine contacts are provided by residues Asn-156, Asp-221, and 225-226 (SM). Carbamoyl phosphate contacts are provided by residues 262–263 (CL) and Arg-290.

The protein belongs to the aspartate/ornithine carbamoyltransferase superfamily. OTCase family.

It localises to the cytoplasm. The enzyme catalyses carbamoyl phosphate + L-ornithine = L-citrulline + phosphate + H(+). It functions in the pathway amino-acid biosynthesis; L-arginine biosynthesis; L-arginine from L-ornithine and carbamoyl phosphate: step 1/3. Functionally, reversibly catalyzes the transfer of the carbamoyl group from carbamoyl phosphate (CP) to the N(epsilon) atom of ornithine (ORN) to produce L-citrulline. This chain is Ornithine carbamoyltransferase, found in Methanococcus maripaludis (strain C7 / ATCC BAA-1331).